A 304-amino-acid chain; its full sequence is dTDP-4-dehydrorhamnose reductase (304 aa).

Residues 15-17 (GQL), 41-42 (DI), and 63-65 (AYT) contribute to the NADH site. NADPH is bound by residues 16-17 (QL), 41-42 (DI), and 63-65 (AYT). 104–105 (TD) is a dTDP-beta-L-rhamnose binding site. The NADH site is built by tyrosine 132 and lysine 136. NADPH-binding residues include tyrosine 132 and lysine 136. Tyrosine 132 serves as the catalytic Proton donor/acceptor. DTDP-beta-L-rhamnose is bound at residue tryptophan 157.

This sequence belongs to the dTDP-4-dehydrorhamnose reductase family. Mg(2+) serves as cofactor.

The catalysed reaction is dTDP-beta-L-rhamnose + NADP(+) = dTDP-4-dehydro-beta-L-rhamnose + NADPH + H(+). It functions in the pathway carbohydrate biosynthesis; dTDP-L-rhamnose biosynthesis. Functionally, involved in the biosynthesis of the dTDP-L-rhamnose which is a component of the critical linker, D-N-acetylglucosamine-L-rhamnose disaccharide, which connects the galactan region of arabinogalactan to peptidoglycan via a phosphodiester linkage. Catalyzes the reduction of dTDP-6-deoxy-L-lyxo-4-hexulose to yield dTDP-L-rhamnose. This Mycobacterium tuberculosis (strain CDC 1551 / Oshkosh) protein is dTDP-4-dehydrorhamnose reductase.